The chain runs to 1328 residues: MNRTSPDSEQPPASEPVWERPWSVEEIRRSSQNWSLAADAGLLQFLQEFSQQTISRTHEIKKQVDGLIQETKATHCRLHNVFNDFLMLSNTQFIENRVYDEEVEDQALKTEAEKAEQEKTREQKEIDLIPKVQEAVNYGLQVLDSAFEQLDIKAGNSDSEEEDANERVELILEPKDLYIDRPLPYLIGSKLFMEQEDVGLGELSSEEGSVGSDRGSIVDSEDEKEEEESDDFASHSDNEQNQHITQMSDEEEDDDADLFADSEKEGDDIEDIEESAKSKRPTSFADELAARIKGDVSNQRKEGHTDGKPQRTVKEKKERRTPADDEEDILFPPPTLTDEDFSPFGSRGGLFSDRQGLFDDDDESDLFKEAPRGQPAQGPVSEESPPSPKPGKKIPAGAVSVFLGYTDVSGSTSAPSLKEFQKHEQSTPGKSPHLPAPTGLFDDDDNDSDEDDNFFMPSSSKPSKTDKVKPTTIIFDDDEGDLFKEKTTALPAASVSQTDENKARTDKTITLPSSKNPKLVSETKTQKGLFSDEEDSEDLFSSQSSSKTKSASVLSSQPPASVSLFGDEDEEDNLFGSAAAKKQTSSLPPQSQEKAKPSEQPPKKASALFSSDEEDQWSVADSQTKLASERKSKGERWDAGTNQGQEAKAVKKTNLFEEEDDDGVDLFAIAKDSQKKTQRTSLLFEDDTDSGSSLFSLPPTSVPPAATKKESIPKVPLLFSDEEDSEVPSGVKPVDLKAENAAASPEVGSADVANVAQKEGLLPTSDQEAGGPSDIFSSSSPLDKGAKGRTKTVLSLFDEDEDKVEDDSNTCAPQGGLEKGVKTDRRPKSTGVFQDEELLFSHKLQKDNDPDVDLFAGTKKTRLSMPSGGSLFGDDDDDDLFSTAKTQPAQPVVPEKKGTLRKDHKPPELTEGSKEKSTWKAETAQDSSGLTPFKSREPSSRIGKIQANLAINPATLLPSVAPQIPGAKPASCELAFPSSEPARSHIREAVPTLPGSEEAGVSFDLPAQADTLHSANKGRVKVRGKRRPQTRAARRLAAQESSEAEDVTIDRGPVTQLSSSPVLPNGHQPLLQPRMASGETSSEKAMAVPWEGGPVLSAVDRSFFVKSLPQTGNEAHLFDSGDIFPKSTGSQSMEGASVKAGETPAHSSAGRKEKSLVFPDLSEASGVDDLFQSAKPRPTKKRNPFPLLEDEEDLFADQKGKKNQWKSDSHQDVVSKTQDIFEDDIFATEAIKKPFPKKREKERTLEPNLFDDNIDIFADLTVKPKEKPKKKVTAKSMFDDDTDDIFSSGLQAKASKPKSQSAEAVSELRSENKVSNIFDDPLNAFGSQ.

The sufficient for interaction with WASHC3, WASHC4 and WASHC5; required for interaction with WASHC1 stretch occupies residues 1–219; it reads MNRTSPDSEQ…VGSDRGSIVD (219 aa). Phosphoserine occurs at positions 157, 159, 204, 205, and 209. Over residues 201 to 213 the composition is skewed to low complexity; the sequence is GELSSEEGSVGSD. Disordered stretches follow at residues 201 to 655 and 675 to 830; these read GELS…KTNL and KKTQ…PKST. 2 stretches are compositionally biased toward acidic residues: residues 219–231 and 248–273; these read DSED…ESDD and SDEE…EDIE. Serine 283 carries the phosphoserine modification. Residues 288-323 show a composition bias toward basic and acidic residues; sequence LAARIKGDVSNQRKEGHTDGKPQRTVKEKKERRTPA. Position 321 is a phosphothreonine (threonine 321). The sufficient for interaction with CCDC93 stretch occupies residues 346-592; it reads SRGGLFSDRQ…QTSSLPPQSQ (247 aa). Residues 347–1328 form an interaction with VPS35 region; the sequence is RGGLFSDRQG…DDPLNAFGSQ (982 aa). The LFa 1 signature appears at 357–367; it reads LFDDDDESDLF. Residues serine 384 and serine 387 each carry the phosphoserine modification. Short sequence motifs (LFa) lie at residues 440 to 455 and 474 to 483; these read LFDD…DNFF and IFDDDEGDLF. Residues 441–453 are compositionally biased toward acidic residues; it reads FDDDDNDSDEDDN. Over residues 508–528 the composition is skewed to polar residues; that stretch reads TITLPSSKNPKLVSETKTQKG. Short sequence motifs (LFa) lie at residues 529–540 and 564–575; these read LFSDEEDSEDLF and LFGDEDEEDNLF. Serine 531 and serine 536 each carry phosphoserine. Positions 539–556 are enriched in low complexity; that stretch reads LFSSQSSSKTKSASVLSS. The segment covering 582 to 592 has biased composition (polar residues); sequence KQTSSLPPQSQ. A phosphoserine mark is found at serine 610 and serine 611. A compositionally biased stretch (basic and acidic residues) spans 627 to 638; that stretch reads ASERKSKGERWD. 2 short sequence motifs (LFa) span residues 655–667 and 683–695; these read LFEE…VDLF and LFED…SSLF. Residues 690–699 are compositionally biased toward polar residues; that stretch reads SGSSLFSLPP. 5 positions are modified to phosphoserine: serine 720, serine 744, serine 749, serine 780, and serine 795. Residues 797 to 808 show a composition bias toward acidic residues; the sequence is FDEDEDKVEDDS. 2 consecutive short sequence motifs (LFa) follow at residues 832–840 and 849–855; these read VFQDEELLF and DPDVDLF. Disordered stretches follow at residues 863–940 and 991–1088; these read LSMP…EPSS and PTLP…AMAV. 2 positions are modified to phosphoserine: serine 867 and serine 870. An LFa 10 motif is present at residues 871–881; sequence LFGDDDDDDLF. A compositionally biased stretch (basic and acidic residues) spans 894–919; it reads PEKKGTLRKDHKPPELTEGSKEKSTW. An interaction with phospholipids region spans residues 925–1328; it reads QDSSGLTPFK…DDPLNAFGSQ (404 aa). A compositionally biased stretch (basic residues) spans 1016–1034; it reads NKGRVKVRGKRRPQTRAAR. The tract at residues 1017 to 1035 is required for interaction with F-actin-capping protein subunit alpha (CAPZA1 or CAPZA2 or CAPZA3); that stretch reads KGRVKVRGKRRPQTRAARR. Serine 1042, serine 1060, serine 1077, and serine 1102 each carry phosphoserine. Residues 1115-1210 form a disordered region; the sequence is AHLFDSGDIF…KKNQWKSDSH (96 aa). Short sequence motifs (LFa) lie at residues 1117–1124, 1157–1171, and 1187–1195; these read LFDSGDIF, VFPD…DDLF, and LLEDEEDLF. 2 positions are modified to phosphoserine: serine 1162 and serine 1165. The segment covering 1196–1210 has biased composition (basic and acidic residues); the sequence is ADQKGKKNQWKSDSH. Short sequence motifs (LFa) lie at residues 1220–1226, 1249–1257, and 1277–1286; these read IFEDDIF, LFDDNIDIF, and MFDDDTDDIF. A disordered region spans residues 1289–1310; sequence GLQAKASKPKSQSAEAVSELRS. An LFa 17 motif is present at residues 1317 to 1325; it reads IFDDPLNAF. Position 1327 is a phosphoserine (serine 1327).

It belongs to the FAM21 family. As to quaternary structure, component of the WASH core complex also described as WASH regulatory complex (SHRC) composed of WASHC1, WASHC2, WASHC3, WASHC4 and WASHC5; in the complex interacts (via N-terminus) directly with WASHC1. The WASH core complex associates with the F-actin-capping protein dimer (formed by CAPZA1, CAPZA2 or CAPZA3 and CAPZB) in a transient or substoichiometric manner which was initially described as WASH complex. Interacts with VPS35; mediates the association with the retromer CSC complex. Interacts with FKBP15. Interacts with CCDC93, CCDC22, VPS35L; indicative for an association of the WASH core complex with the CCC and retriever complexes. Directly interacts with TBC1D23.

The protein resides in the early endosome membrane. It localises to the cell membrane. Acts as a component of the WASH core complex that functions as a nucleation-promoting factor (NPF) at the surface of endosomes, where it recruits and activates the Arp2/3 complex to induce actin polymerization, playing a key role in the fission of tubules that serve as transport intermediates during endosome sorting. Mediates the recruitment of the WASH core complex to endosome membranes via binding to phospholipids and VPS35 of the retromer CSC. Mediates the recruitment of the F-actin-capping protein dimer to the WASH core complex probably promoting localized F-actin polymerization needed for vesicle scission. Via its C-terminus binds various phospholipids, most strongly phosphatidylinositol 4-phosphate (PtdIns-(4)P), phosphatidylinositol 5-phosphate (PtdIns-(5)P) and phosphatidylinositol 3,5-bisphosphate (PtdIns-(3,5)P2). Involved in the endosome-to-plasma membrane trafficking and recycling of SNX27-retromer-dependent cargo proteins, such as GLUT1. Required for the association of DNAJC13, ENTR1, ANKRD50 with retromer CSC subunit VPS35. Required for the endosomal recruitment of CCC and retriever complexes subunits COMMD1 and CCDC93 as well as the retrievere complex subunit VPS35L. The protein is WASH complex subunit 2 of Rattus norvegicus (Rat).